The following is a 278-amino-acid chain: Achaete-scute homolog 5 (278 aa).

The tract at residues 1 to 66 is disordered; the sequence is MPMGAAERGA…GPFGGGLALG (66 aa). A bHLH domain is found at 155–207; that stretch reads AFIQKRNERERQRVKCVNEGYARLRGHLPGALAEKRLSKVETLRAAIRYIKYL. Positions 214 to 278 are disordered; it reads APDGSTPPAS…PFLESEESWH (65 aa). The segment covering 230-239 has biased composition (pro residues); it reads GPCPAPPATP. Over residues 240–249 the composition is skewed to basic and acidic residues; it reads RPDRPGDGEA. Low complexity predominate over residues 252 to 271; it reads PSSLVPESSESSCFSPSPFL.

As to quaternary structure, interacts with transcription factor TCF3/E12.

It is found in the nucleus. Functionally, transcription factor. Probably binds E-box motifs 5'-CANNTG-3' in complex with transcription factor TCF3/E12. Negatively modulates transcription of target genes such as CDH1/E-cadherin, perhaps by recruiting the PRC2 repressive complex to regulatory elements. Regulates ameloblast development and tooth germ growth, perhaps acting by positively modulating migration of inner enamel epithelium (IEE) cells. Plays a role in enamel formation. This chain is Achaete-scute homolog 5 (ASCL5), found in Homo sapiens (Human).